Here is a 426-residue protein sequence, read N- to C-terminus: Tyrosine--tRNA ligase (426 aa).

Tyr-36 contributes to the L-tyrosine binding site. The short motif at 41–50 (PTAPSLHVGH) is the 'HIGH' region element. Positions 174 and 178 each coordinate L-tyrosine. A 'KMSKS' region motif is present at residues 234–238 (KLGKS). Lys-237 contributes to the ATP binding site. The S4 RNA-binding domain maps to 359–416 (DGIVDLLVASGLSPSRGAARRTIDEGGVLVNNIRIQSEEWTPRTSDFLHGRWLVLRRG).

Belongs to the class-I aminoacyl-tRNA synthetase family. TyrS type 1 subfamily. As to quaternary structure, homodimer.

The protein localises to the cytoplasm. It catalyses the reaction tRNA(Tyr) + L-tyrosine + ATP = L-tyrosyl-tRNA(Tyr) + AMP + diphosphate + H(+). Its function is as follows. Catalyzes the attachment of tyrosine to tRNA(Tyr) in a two-step reaction: tyrosine is first activated by ATP to form Tyr-AMP and then transferred to the acceptor end of tRNA(Tyr). The polypeptide is Tyrosine--tRNA ligase (Mycobacterium leprae (strain TN)).